We begin with the raw amino-acid sequence, 517 residues long: Serine hydroxymethyltransferase 2, mitochondrial (517 aa).

The N-terminal 29 residues, 1 to 29 (MALALRRLSSSVKKPISLLSSNGGSLRFM), are a transit peptide targeting the mitochondrion. S82 is a binding site for L-serine. Pemetrexed contacts are provided by residues S82, Y102, E104, Y112, 148–150 (SGS), and H177. E104 and Y112 together coordinate L-serine. Position 104 (E104) interacts with methotrexate. Residue 184-186 (TDT) coordinates methotrexate. The pemetrexed site is built by S232 and H260. The L-serine site is built by H260 and K286. N6-(pyridoxal phosphate)lysine is present on K286. G331 contacts pemetrexed. K414 contributes to the methotrexate binding site. R430 provides a ligand contact to L-serine. R430 contacts pemetrexed.

This sequence belongs to the SHMT family. As to quaternary structure, homotetramer. It depends on pyridoxal 5'-phosphate as a cofactor. In terms of tissue distribution, ubiquitous. Mainly expressed in the shoot apical meristem and roots. Also detected in the leaf vasculature, especially in the protoxylem and adjacent cell layers.

It localises to the mitochondrion. The enzyme catalyses (6R)-5,10-methylene-5,6,7,8-tetrahydrofolate + glycine + H2O = (6S)-5,6,7,8-tetrahydrofolate + L-serine. It functions in the pathway one-carbon metabolism; tetrahydrofolate interconversion. Its activity is regulated as follows. Inhibited by the antifolate drugs methotrexate and pemetrexed. Its function is as follows. Functions outside the photorespiratory pathway in catalyzing the interconversion of serine and glycine with the conversion of tetrahydrofolate (THF) into 5,10-methylene-THF. In Arabidopsis thaliana (Mouse-ear cress), this protein is Serine hydroxymethyltransferase 2, mitochondrial.